We begin with the raw amino-acid sequence, 593 residues long: Probable 5'-nucleotidase (593 aa).

Residues 1-21 (MKRFIPHRVIHAVCIGLALVG) form the signal peptide. Residue Cys22 is the site of N-palmitoyl cysteine attachment. Cys22 carries the S-diacylglycerol cysteine lipid modification. 5 residues coordinate a divalent metal cation: Asp41, His43, Asp91, Asn123, and His224. Residues Phe456 and 539 to 545 (YIARGKD) each bind substrate.

The protein belongs to the 5'-nucleotidase family. It depends on a divalent metal cation as a cofactor.

It is found in the cell membrane. The enzyme catalyses a ribonucleoside 5'-phosphate + H2O = a ribonucleoside + phosphate. This chain is Probable 5'-nucleotidase, found in Treponema pallidum (strain Nichols).